Reading from the N-terminus, the 300-residue chain is Ribosomal protein L11 methyltransferase (300 aa).

The S-adenosyl-L-methionine site is built by Thr152, Gly173, Asp195, and Asn234.

The protein belongs to the methyltransferase superfamily. PrmA family.

It is found in the cytoplasm. The enzyme catalyses L-lysyl-[protein] + 3 S-adenosyl-L-methionine = N(6),N(6),N(6)-trimethyl-L-lysyl-[protein] + 3 S-adenosyl-L-homocysteine + 3 H(+). Functionally, methylates ribosomal protein L11. The polypeptide is Ribosomal protein L11 methyltransferase (Burkholderia vietnamiensis (strain G4 / LMG 22486) (Burkholderia cepacia (strain R1808))).